A 676-amino-acid chain; its full sequence is Protein TAPT1 homolog (676 aa).

The segment at 1–44 (MNATLNSAGGKRQLRFRGDVTGSRVEELHHQQQEEQKQKAPLAQ) is disordered. Residues 24–38 (RVEELHHQQQEEQKQ) are compositionally biased toward basic and acidic residues. The next 6 helical transmembrane spans lie at 128-148 (SFLY…WALV), 170-190 (EICD…MLLV), 249-269 (VLTH…LIMF), 346-366 (FCVM…IDWV), 414-434 (GFIP…AVSF), and 437-457 (LAAW…RICL). The segment at 625–676 (SGDGVTSAKAKKATQRLPKRTHKRSESEPGMPSMVEKGGAAGIAGGNQTTQL) is disordered. A compositionally biased stretch (basic residues) spans 633-647 (KAKKATQRLPKRTHK).

Belongs to the TAPT1 family.

Its subcellular location is the membrane. The polypeptide is Protein TAPT1 homolog (Drosophila melanogaster (Fruit fly)).